A 703-amino-acid polypeptide reads, in one-letter code: Polyribonucleotide nucleotidyltransferase (703 aa).

2 residues coordinate Mg(2+): Asp-482 and Asp-488. The KH domain maps to 549-607 (PKAQVMKIPEDKVGLVIGPAGKNIKYIKEQFGASVWIDGANAYINAPTIEAVNKAADFI). In terms of domain architecture, S1 motif spans 617 to 679 (GGVYEGKVIR…EQNRLNLCSP (63 aa)). Positions 677–703 (CSPDYQKPENQERPRKEQLNRKPHHRK) are disordered. Positions 682-696 (QKPENQERPRKEQLN) are enriched in basic and acidic residues.

The protein belongs to the polyribonucleotide nucleotidyltransferase family. The cofactor is Mg(2+).

It is found in the cytoplasm. The enzyme catalyses RNA(n+1) + phosphate = RNA(n) + a ribonucleoside 5'-diphosphate. In terms of biological role, involved in mRNA degradation. Catalyzes the phosphorolysis of single-stranded polyribonucleotides processively in the 3'- to 5'-direction. The protein is Polyribonucleotide nucleotidyltransferase of Hydrogenobaculum sp. (strain Y04AAS1).